We begin with the raw amino-acid sequence, 431 residues long: MELESLFQDIMDGFAVYNNKVAVAVSGGIDSIVLLHLITSWAEKRQCPPPIALAVNHGLRPESQEEVEFVVSYAKELGVKKSFILNWKRQNIKGNVQSQARKARYELLTEWCKNNDVKHLFIAHHKDDQAETFLLRLERGSGLDGLSSMDYKSSLNGVCMLRPLLSFSRSRIKKYADFYRLKWVEDRSNQSLKYKRTLYRNLLKASGNQEILTERICLTTLHIKRATKALMHYTRLAFNDCVNVHDLGYIEIKLSEFYKLPEEIALRLLLYSIMVISSKHYKPRYNSLIAIFNKVLQKDNDVHCTLSGCKIRKYGESILIIRESSKIQEISVSLPLNAPIEWDNRFSCTILGNQECSVTIAPLKKTQKIPKFLKDYDCCPEVFYSLPVVLKDGKVLAYLHLNHDRKNINGDEVQCIINSTIKQNLVILAGI.

Position 26 to 31 (S26 to S31) interacts with ATP.

The protein belongs to the tRNA(Ile)-lysidine synthase family.

The protein resides in the cytoplasm. It catalyses the reaction cytidine(34) in tRNA(Ile2) + L-lysine + ATP = lysidine(34) in tRNA(Ile2) + AMP + diphosphate + H(+). Its function is as follows. Ligates lysine onto the cytidine present at position 34 of the AUA codon-specific tRNA(Ile) that contains the anticodon CAU, in an ATP-dependent manner. Cytidine is converted to lysidine, thus changing the amino acid specificity of the tRNA from methionine to isoleucine. The chain is tRNA(Ile)-lysidine synthase from Wolbachia sp. subsp. Brugia malayi (strain TRS).